We begin with the raw amino-acid sequence, 561 residues long: Dihydroxy-acid dehydratase (561 aa).

Cysteine 50 serves as a coordination point for [2Fe-2S] cluster. Aspartate 82 contacts Mg(2+). Residue cysteine 123 participates in [2Fe-2S] cluster binding. 2 residues coordinate Mg(2+): aspartate 124 and lysine 125. Lysine 125 is subject to N6-carboxylysine. Residue cysteine 195 coordinates [2Fe-2S] cluster. Glutamate 447 provides a ligand contact to Mg(2+). Serine 473 acts as the Proton acceptor in catalysis.

It belongs to the IlvD/Edd family. As to quaternary structure, homodimer. It depends on [2Fe-2S] cluster as a cofactor. Requires Mg(2+) as cofactor.

The enzyme catalyses (2R)-2,3-dihydroxy-3-methylbutanoate = 3-methyl-2-oxobutanoate + H2O. The catalysed reaction is (2R,3R)-2,3-dihydroxy-3-methylpentanoate = (S)-3-methyl-2-oxopentanoate + H2O. It participates in amino-acid biosynthesis; L-isoleucine biosynthesis; L-isoleucine from 2-oxobutanoate: step 3/4. It functions in the pathway amino-acid biosynthesis; L-valine biosynthesis; L-valine from pyruvate: step 3/4. Its function is as follows. Functions in the biosynthesis of branched-chain amino acids. Catalyzes the dehydration of (2R,3R)-2,3-dihydroxy-3-methylpentanoate (2,3-dihydroxy-3-methylvalerate) into 2-oxo-3-methylpentanoate (2-oxo-3-methylvalerate) and of (2R)-2,3-dihydroxy-3-methylbutanoate (2,3-dihydroxyisovalerate) into 2-oxo-3-methylbutanoate (2-oxoisovalerate), the penultimate precursor to L-isoleucine and L-valine, respectively. This Acaryochloris marina (strain MBIC 11017) protein is Dihydroxy-acid dehydratase.